A 199-amino-acid polypeptide reads, in one-letter code: Puromycin N-acetyltransferase (199 aa).

The 193-residue stretch at 6-198 (PTVRLATRDD…RTWCMTRKPG (193 aa)) folds into the N-acetyltransferase domain.

Functionally, detoxification of puromycin. This Streptomyces alboniger protein is Puromycin N-acetyltransferase (pac).